The chain runs to 887 residues: Alanine--tRNA ligase (887 aa).

The Zn(2+) site is built by H564, H568, C675, and H679. The segment covering 851-866 (GQGGGGRPDMAQGGGP) has biased composition (gly residues). Residues 851–871 (GQGGGGRPDMAQGGGPDGDKA) are disordered.

The protein belongs to the class-II aminoacyl-tRNA synthetase family. Zn(2+) is required as a cofactor.

Its subcellular location is the cytoplasm. The catalysed reaction is tRNA(Ala) + L-alanine + ATP = L-alanyl-tRNA(Ala) + AMP + diphosphate. Its function is as follows. Catalyzes the attachment of alanine to tRNA(Ala) in a two-step reaction: alanine is first activated by ATP to form Ala-AMP and then transferred to the acceptor end of tRNA(Ala). Also edits incorrectly charged Ser-tRNA(Ala) and Gly-tRNA(Ala) via its editing domain. The polypeptide is Alanine--tRNA ligase (Rhizorhabdus wittichii (strain DSM 6014 / CCUG 31198 / JCM 15750 / NBRC 105917 / EY 4224 / RW1) (Sphingomonas wittichii)).